The primary structure comprises 753 residues: 5-methyltetrahydropteroyltriglutamate--homocysteine methyltransferase (753 aa).

Residues 17–20 (RELK) and K117 contribute to the 5-methyltetrahydropteroyltri-L-glutamate site. L-homocysteine is bound by residues 431 to 433 (IGS) and E484. Residues 431–433 (IGS) and E484 each bind L-methionine. 5-methyltetrahydropteroyltri-L-glutamate is bound by residues 515-516 (RC) and W561. Position 599 (D599) interacts with L-homocysteine. An L-methionine-binding site is contributed by D599. E605 contacts 5-methyltetrahydropteroyltri-L-glutamate. Zn(2+) is bound by residues H641, C643, and E665. The active-site Proton donor is the H694. C726 is a Zn(2+) binding site.

It belongs to the vitamin-B12 independent methionine synthase family. Zn(2+) is required as a cofactor.

The enzyme catalyses 5-methyltetrahydropteroyltri-L-glutamate + L-homocysteine = tetrahydropteroyltri-L-glutamate + L-methionine. Its pathway is amino-acid biosynthesis; L-methionine biosynthesis via de novo pathway; L-methionine from L-homocysteine (MetE route): step 1/1. Catalyzes the transfer of a methyl group from 5-methyltetrahydrofolate to homocysteine resulting in methionine formation. This chain is 5-methyltetrahydropteroyltriglutamate--homocysteine methyltransferase, found in Shigella dysenteriae serotype 1 (strain Sd197).